Consider the following 967-residue polypeptide: Leucine--tRNA ligase (967 aa).

A 'HIGH' region motif is present at residues 43–53 (PYLSGHLHVGH). The 'KMSKS' region motif lies at 650-654 (KMSKS). Lys-653 is a binding site for ATP.

Belongs to the class-I aminoacyl-tRNA synthetase family.

The protein resides in the cytoplasm. It catalyses the reaction tRNA(Leu) + L-leucine + ATP = L-leucyl-tRNA(Leu) + AMP + diphosphate. The sequence is that of Leucine--tRNA ligase from Pyrococcus horikoshii (strain ATCC 700860 / DSM 12428 / JCM 9974 / NBRC 100139 / OT-3).